The primary structure comprises 242 residues: 7-cyano-7-deazaguanine synthase (242 aa).

ATP is bound at residue 14–24 (FSGGQDSATCL). Residues Cys202, Cys217, Cys220, and Cys223 each coordinate Zn(2+).

The protein belongs to the QueC family. Requires Zn(2+) as cofactor.

The enzyme catalyses 7-carboxy-7-deazaguanine + NH4(+) + ATP = 7-cyano-7-deazaguanine + ADP + phosphate + H2O + H(+). The protein operates within purine metabolism; 7-cyano-7-deazaguanine biosynthesis. Functionally, catalyzes the ATP-dependent conversion of 7-carboxy-7-deazaguanine (CDG) to 7-cyano-7-deazaguanine (preQ(0)). The chain is 7-cyano-7-deazaguanine synthase from Rhodopseudomonas palustris (strain BisA53).